Consider the following 83-residue polypeptide: Large ribosomal subunit protein bL31 (83 aa).

It belongs to the bacterial ribosomal protein bL31 family. Type A subfamily. In terms of assembly, part of the 50S ribosomal subunit.

Binds the 23S rRNA. In Gloeothece citriformis (strain PCC 7424) (Cyanothece sp. (strain PCC 7424)), this protein is Large ribosomal subunit protein bL31.